Consider the following 143-residue polypeptide: Fluoride-specific ion channel FluC (143 aa).

A run of 4 helical transmembrane segments spans residues 6 to 26, 38 to 58, 70 to 90, and 103 to 123; these read CILV…VSVL, TILI…LTLA, LFVM…SLQT, and MVNV…GHVV. The Na(+) site is built by Gly-78 and Thr-81.

It belongs to the fluoride channel Fluc/FEX (TC 1.A.43) family.

The protein resides in the cell inner membrane. The catalysed reaction is fluoride(in) = fluoride(out). Na(+) is not transported, but it plays an essential structural role and its presence is essential for fluoride channel function. Functionally, fluoride-specific ion channel. Important for reducing fluoride concentration in the cell, thus reducing its toxicity. The sequence is that of Fluoride-specific ion channel FluC from Methylobacterium radiotolerans (strain ATCC 27329 / DSM 1819 / JCM 2831 / NBRC 15690 / NCIMB 10815 / 0-1).